We begin with the raw amino-acid sequence, 42 residues long: Tachystatin-B2 (42 aa).

3 disulfide bridges follow: cysteine 4–cysteine 20, cysteine 11–cysteine 25, and cysteine 19–cysteine 37.

Granular hemocytes, small secretory granules.

It localises to the secreted. Its function is as follows. Exhibits stronger antimicrobial activity against the Gram-positive bacteria (S.aureus (IC(50) is 7.4 ug/ml)) and fungi (C.albicans (IC(50) is 3.0 ug/ml) and P.pastoris (IC(50) is 0.1 ug/ml)) than Gram-negative bacteria (E.coli no inhibition at 100 ug/ml). Binds to chitin (4.3 uM are required to obtain 50% of binding). Does not cause hemolysis on sheep erythrocytes. Has no blocking activity on the P-type calcium channel. This Tachypleus tridentatus (Japanese horseshoe crab) protein is Tachystatin-B2.